Consider the following 61-residue polypeptide: Large ribosomal subunit protein uL30 (61 aa).

This sequence belongs to the universal ribosomal protein uL30 family. In terms of assembly, part of the 50S ribosomal subunit.

The polypeptide is Large ribosomal subunit protein uL30 (Neisseria gonorrhoeae (strain ATCC 700825 / FA 1090)).